Here is a 230-residue protein sequence, read N- to C-terminus: 5'-methylthioadenosine/S-adenosylhomocysteine nucleosidase (230 aa).

E12 acts as the Proton acceptor in catalysis. Substrate is bound by residues G78, I153, and 174-175 (ME). D198 functions as the Proton donor in the catalytic mechanism.

This sequence belongs to the PNP/UDP phosphorylase family. MtnN subfamily.

The enzyme catalyses S-adenosyl-L-homocysteine + H2O = S-(5-deoxy-D-ribos-5-yl)-L-homocysteine + adenine. The catalysed reaction is S-methyl-5'-thioadenosine + H2O = 5-(methylsulfanyl)-D-ribose + adenine. It catalyses the reaction 5'-deoxyadenosine + H2O = 5-deoxy-D-ribose + adenine. The protein operates within amino-acid biosynthesis; L-methionine biosynthesis via salvage pathway; S-methyl-5-thio-alpha-D-ribose 1-phosphate from S-methyl-5'-thioadenosine (hydrolase route): step 1/2. Functionally, catalyzes the irreversible cleavage of the glycosidic bond in both 5'-methylthioadenosine (MTA) and S-adenosylhomocysteine (SAH/AdoHcy) to adenine and the corresponding thioribose, 5'-methylthioribose and S-ribosylhomocysteine, respectively. Also cleaves 5'-deoxyadenosine, a toxic by-product of radical S-adenosylmethionine (SAM) enzymes, into 5-deoxyribose and adenine. In Shewanella loihica (strain ATCC BAA-1088 / PV-4), this protein is 5'-methylthioadenosine/S-adenosylhomocysteine nucleosidase.